The sequence spans 176 residues: Peroxynitrite isomerase 1 (176 aa).

Residues 1-23 (MDENSTLSPAHSDAAASSSANTP) form a disordered region. Residues 8 to 20 (SPAHSDAAASSSA) show a composition bias toward low complexity. A GXWXGXG motif is present at residues 37–43 (GLWRGEG). A heme b-binding site is contributed by His168.

This sequence belongs to the nitrobindin family. As to quaternary structure, homodimer. Heme b is required as a cofactor.

It catalyses the reaction peroxynitrite = nitrate. It functions in the pathway nitrogen metabolism. In terms of biological role, heme-binding protein able to scavenge peroxynitrite and to protect free L-tyrosine against peroxynitrite-mediated nitration, by acting as a peroxynitrite isomerase that converts peroxynitrite to nitrate. Therefore, this protein likely plays a role in peroxynitrite sensing and in the detoxification of reactive nitrogen and oxygen species (RNS and ROS, respectively). Is able to bind nitric oxide (NO) in vitro, but may act as a sensor of peroxynitrite levels in vivo. The polypeptide is Peroxynitrite isomerase 1 (Rhodococcus jostii (strain RHA1)).